Here is a 337-residue protein sequence, read N- to C-terminus: DNA-directed RNA polymerase subunit alpha (337 aa).

Residues 1-233 are alpha N-terminal domain (alpha-NTD); sequence MVREKVKVST…NLFIPFLHVE (233 aa). The alpha C-terminal domain (alpha-CTD) stretch occupies residues 267–337; sequence LAFQYIFIDQ…IEKAFQKKID (71 aa).

Belongs to the RNA polymerase alpha chain family. In plastids the minimal PEP RNA polymerase catalytic core is composed of four subunits: alpha, beta, beta', and beta''. When a (nuclear-encoded) sigma factor is associated with the core the holoenzyme is formed, which can initiate transcription.

It localises to the plastid. It is found in the chloroplast. It carries out the reaction RNA(n) + a ribonucleoside 5'-triphosphate = RNA(n+1) + diphosphate. DNA-dependent RNA polymerase catalyzes the transcription of DNA into RNA using the four ribonucleoside triphosphates as substrates. The protein is DNA-directed RNA polymerase subunit alpha of Arabis hirsuta (Hairy rock-cress).